The primary structure comprises 327 residues: MQSSRKIMILKRNIKGLKSSAIIATYLTLNKLFIDKFCKTQESTYPIHFVHCHFGGIKKFHSHCQLSSSYTNSGQKSFKSFNSLRFIVLKSKTCLLRYKLLIKTFCCITYSKIENLSNTRMARLTAPSKGPSFSNLNKPNDLLKAEIEDNEASHYSQNQSSDSDSDEAPEEVSLKSSSDEVKKRLQRLKGNELQLRKAEREKRRLQNERNRERNAQRVSASKLDLAILEAAEVEEINSTTEIEEKVDEASLDLYTPKGHKIVFPNNEIPKKRTRSFRKGDFKVSVLKETNDPLLAPNYEKKLSQRKRDWINRQSVPRASKRRRPLTY.

The segment at 151–218 is disordered; the sequence is EASHYSQNQS…RNRERNAQRV (68 aa). 2 positions are modified to phosphoserine: Ser163 and Ser165. A coiled-coil region spans residues 180–219; the sequence is EVKKRLQRLKGNELQLRKAEREKRRLQNERNRERNAQRVS. Over residues 194–215 the composition is skewed to basic and acidic residues; sequence QLRKAEREKRRLQNERNRERNA.

The protein belongs to the UTP16 family. Component of the ribosomal small subunit (SSU) processome.

Its subcellular location is the nucleus. It localises to the nucleolus. Functionally, functions as part of the small subunit (SSU) processome, first precursor of the small eukaryotic ribosomal subunit that coordinates the first two steps of ribosome biogenesis in transcription of the primary transcript pre-RNA and pre-18S processing. During the assembly of the SSU processome in the nucleolus, many ribosome biogenesis factors, an RNA chaperone and ribosomal proteins associate with the nascent pre-rRNA and work in concert to generate RNA folding, modifications, rearrangements and cleavage as well as targeted degradation of pre-ribosomal RNA by the RNA exosome. This is U3 small nucleolar RNA-associated protein 16 (utp16) from Schizosaccharomyces pombe (strain 972 / ATCC 24843) (Fission yeast).